The chain runs to 884 residues: Schlafen family member 5 (884 aa).

574–581 serves as a coordination point for ATP; sequence GLPGSGKT.

It belongs to the Schlafen family. Subgroup III subfamily.

Its function is as follows. May have a role in hematopoietic cell differentiation. The polypeptide is Schlafen family member 5 (Slfn5) (Mus musculus (Mouse)).